The chain runs to 131 residues: Rhodopsin (131 aa).

The Extracellular portion of the chain corresponds to 1–16 (CGIDYYTRAPGYNNES). N14 is a glycosylation site (N-linked (GlcNAc...) asparagine). A helical transmembrane segment spans residues 17 to 38 (FVIYMFIVHFLIPLFIISFCYG). At 39-66 (NLLCAVKAAAAAQEESETTQRAEREVTR) the chain is on the cytoplasmic side. A helical membrane pass occupies residues 67-88 (MVIMMVISYLVSWVPYASVAWY). The Extracellular portion of the chain corresponds to 89-100 (IFSNQGSEFGPV). A helical membrane pass occupies residues 101–122 (FMTIPAFFAKSSALYNPLIYVL). K110 bears the N6-(retinylidene)lysine mark. The Cytoplasmic segment spans residues 123-131 (MNKQFRHCM).

It belongs to the G-protein coupled receptor 1 family. Opsin subfamily. Phosphorylated on some or all of the serine and threonine residues present in the C-terminal region. In terms of processing, contains one covalently linked retinal chromophore.

It is found in the membrane. Its subcellular location is the cell projection. It localises to the cilium. The protein resides in the photoreceptor outer segment. Functionally, photoreceptor required for image-forming vision at low light intensity. While most salt water fish species use retinal as chromophore, most freshwater fish use 3-dehydroretinal, or a mixture of retinal and 3-dehydroretinal. Light-induced isomerization of 11-cis to all-trans retinal triggers a conformational change that activates signaling via G-proteins. Subsequent receptor phosphorylation mediates displacement of the bound G-protein alpha subunit by arrestin and terminates signaling. The polypeptide is Rhodopsin (rho) (Coregonus autumnalis (Arctic cisco)).